The sequence spans 311 residues: tRNA dimethylallyltransferase (311 aa).

9-16 (GPTAVGKT) is an ATP binding site. Substrate is bound at residue 11–16 (TAVGKT). An interaction with substrate tRNA region spans residues 34 to 37 (DSMQ).

Belongs to the IPP transferase family. Monomer. Mg(2+) serves as cofactor.

It catalyses the reaction adenosine(37) in tRNA + dimethylallyl diphosphate = N(6)-dimethylallyladenosine(37) in tRNA + diphosphate. Its function is as follows. Catalyzes the transfer of a dimethylallyl group onto the adenine at position 37 in tRNAs that read codons beginning with uridine, leading to the formation of N6-(dimethylallyl)adenosine (i(6)A). This Clostridium botulinum (strain Loch Maree / Type A3) protein is tRNA dimethylallyltransferase.